The following is a 393-amino-acid chain: Dual-specificity RNA methyltransferase RlmN (393 aa).

The interval 1-22 (MSEQLLSELSPVAATSPSPAPA) is disordered. Positions 10–22 (SPVAATSPSPAPA) are enriched in low complexity. Glutamate 114 acts as the Proton acceptor in catalysis. Residues 120-358 (EDDRATLCVS…TTIVRKTRGD (239 aa)) form the Radical SAM core domain. A disulfide bond links cysteine 127 and cysteine 364. Cysteine 134, cysteine 138, and cysteine 141 together coordinate [4Fe-4S] cluster. S-adenosyl-L-methionine contacts are provided by residues 188–189 (GE), serine 220, 242–244 (SLH), and asparagine 321. Cysteine 364 acts as the S-methylcysteine intermediate in catalysis.

It belongs to the radical SAM superfamily. RlmN family. [4Fe-4S] cluster is required as a cofactor.

It localises to the cytoplasm. The enzyme catalyses adenosine(2503) in 23S rRNA + 2 reduced [2Fe-2S]-[ferredoxin] + 2 S-adenosyl-L-methionine = 2-methyladenosine(2503) in 23S rRNA + 5'-deoxyadenosine + L-methionine + 2 oxidized [2Fe-2S]-[ferredoxin] + S-adenosyl-L-homocysteine. It carries out the reaction adenosine(37) in tRNA + 2 reduced [2Fe-2S]-[ferredoxin] + 2 S-adenosyl-L-methionine = 2-methyladenosine(37) in tRNA + 5'-deoxyadenosine + L-methionine + 2 oxidized [2Fe-2S]-[ferredoxin] + S-adenosyl-L-homocysteine. In terms of biological role, specifically methylates position 2 of adenine 2503 in 23S rRNA and position 2 of adenine 37 in tRNAs. m2A2503 modification seems to play a crucial role in the proofreading step occurring at the peptidyl transferase center and thus would serve to optimize ribosomal fidelity. This chain is Dual-specificity RNA methyltransferase RlmN, found in Sodalis glossinidius (strain morsitans).